A 298-amino-acid polypeptide reads, in one-letter code: Ribosomal protein uL3 glutamine methyltransferase (298 aa).

It belongs to the protein N5-glutamine methyltransferase family. PrmB subfamily.

The enzyme catalyses L-glutaminyl-[ribosomal protein uL3] + S-adenosyl-L-methionine = N(5)-methyl-L-glutaminyl-[ribosomal protein uL3] + S-adenosyl-L-homocysteine + H(+). Functionally, methylates large ribosomal subunit protein uL3 on a specific glutamine residue. The sequence is that of Ribosomal protein uL3 glutamine methyltransferase from Bordetella pertussis (strain Tohama I / ATCC BAA-589 / NCTC 13251).